Here is a 648-residue protein sequence, read N- to C-terminus: Serine/threonine-protein kinase plk-1 (648 aa).

Positions 1–24 are disordered; the sequence is MNRLPNIAKPPQKSNQRKEKAPPE. A Protein kinase domain is found at 38–289; sequence YEKGRFLGKG…AKQVQRDGFF (252 aa). ATP-binding positions include 44-52 and Lys67; that span reads LGKGGFAHC. Residue Asp161 is the Proton acceptor of the active site. 2 POLO box domains span residues 412–492 and 514–596; these read WISK…YMND and TLRV…RLMS. Residues 612–629 show a composition bias toward low complexity; the sequence is PRSMAAARSASAGSRGPN.

This sequence belongs to the protein kinase superfamily. Ser/Thr protein kinase family. CDC5/Polo subfamily. Interacts with mex-5, mex-6 and spat-1. As to expression, embryos.

The protein localises to the cytoplasm. The protein resides in the cytoskeleton. It localises to the microtubule organizing center. Its subcellular location is the centrosome. It is found in the midbody. The protein localises to the nucleus. The protein resides in the chromosome. It localises to the centromere. Its subcellular location is the kinetochore. The enzyme catalyses L-seryl-[protein] + ATP = O-phospho-L-seryl-[protein] + ADP + H(+). It carries out the reaction L-threonyl-[protein] + ATP = O-phospho-L-threonyl-[protein] + ADP + H(+). Required for oocyte nuclear envelope breakdown before entry of oocyte into spermatheca. In meiotic cells, required for spindle dynamics and probably for spindle attachment to the chromosomes. Zygotic role in the development of the germline and nerve cord. In mitotic cells, plays a role in spindle organization and centrosome maturation. Involved in asymmetric nuclear localization of cdc-25.1 during embryogenesis which affects cell division timing. Together with plk-2, regulates cytoplasm polarity in early embryos. May play a minor role in chromosome pairing and synapsis during oocyte meiosis I. This Caenorhabditis elegans protein is Serine/threonine-protein kinase plk-1 (plk-1).